A 76-amino-acid polypeptide reads, in one-letter code: Potassium/proton antiporter CemA (76 aa).

A helical transmembrane segment spans residues 35-52; sequence QILSCLVSIFPVILDTIF.

It belongs to the CemA family.

The protein resides in the plastid. It localises to the chloroplast inner membrane. The catalysed reaction is K(+)(in) + H(+)(out) = K(+)(out) + H(+)(in). Contributes to K(+)/H(+) antiport activity by supporting proton efflux to control proton extrusion and homeostasis in chloroplasts in a light-dependent manner to modulate photosynthesis. Prevents excessive induction of non-photochemical quenching (NPQ) under continuous-light conditions. Indirectly promotes efficient inorganic carbon uptake into chloroplasts. This Vicia faba (Broad bean) protein is Potassium/proton antiporter CemA.